Consider the following 164-residue polypeptide: Peptidyl-prolyl cis-trans isomerase A (164 aa).

Met-1 is modified (N-acetylmethionine). At Val-2 the chain carries N-acetylvaline; in Peptidyl-prolyl cis-trans isomerase A, N-terminally processed. The PPIase cyclophilin-type domain occupies 7 to 163 (FFDIAVDGEP…KKITIANCGQ (157 aa)). Residue Lys-28 is modified to N6-acetyllysine; alternate. A Glycyl lysine isopeptide (Lys-Gly) (interchain with G-Cter in SUMO2); alternate cross-link involves residue Lys-28. A Glycyl lysine isopeptide (Lys-Gly) (interchain with G-Cter in ubiquitin); alternate cross-link involves residue Lys-28. N6-acetyllysine is present on residues Lys-44 and Lys-76. Residue Ser-77 is modified to Phosphoserine. Residue Lys-82 is modified to N6-acetyllysine; alternate. Residue Lys-82 forms a Glycyl lysine isopeptide (Lys-Gly) (interchain with G-Cter in SUMO2); alternate linkage. A Phosphothreonine modification is found at Thr-93. Asn-108 carries N-linked (GlcNAc...) asparagine glycosylation. An N6-acetyllysine mark is found at Lys-125 and Lys-133.

This sequence belongs to the cyclophilin-type PPIase family. PPIase A subfamily. Interacts with protein phosphatase PPP3CA/calcineurin A. Interacts with isoform 2 of BSG/CD147. Interacts with FOXO1; the interaction promotes FOXO1 dephosphorylation, nuclear accumulation and transcriptional activity. Interacts with integrin ITGA2B:ITGB3; the interaction is ROS and peptidyl-prolyl cis-trans isomerase (PPIase) activity-dependent and is increased in the presence of thrombin. Interacts with MAP3K5. Interacts with TARDBP; the interaction is dependent on the RNA-binding activity of TARDBP and the PPIase activity of PPIA/CYPA and the acetylation of PPIA/CYPA at Lys-125 favors the interaction. Interacts with HNRNPA1, HNRNPA2B1, HNRNPC, RBMX, HNRNPK and HNRNPM. In terms of processing, acetylation at Lys-125 markedly inhibits catalysis of cis to trans isomerization. PPIA acetylation also antagonizes the immunosuppressive effects of cyclosporine by inhibiting the sequential steps of cyclosporine binding and calcineurin inhibition. Acetylation at Lys-125 favors the interaction with TARDBP.

The protein resides in the cytoplasm. It is found in the secreted. It localises to the nucleus. It catalyses the reaction [protein]-peptidylproline (omega=180) = [protein]-peptidylproline (omega=0). Its activity is regulated as follows. Binds cyclosporin A (CsA). CsA mediates some of its effects via an inhibitory action on PPIase. Its function is as follows. Catalyzes the cis-trans isomerization of proline imidic peptide bonds in oligopeptides. Exerts a strong chemotactic effect on leukocytes partly through activation of one of its membrane receptors BSG/CD147, initiating a signaling cascade that culminates in MAPK/ERK activation. Activates endothelial cells (ECs) in a proinflammatory manner by stimulating activation of NF-kappa-B and ERK, JNK and p38 MAP-kinases and by inducing expression of adhesion molecules including SELE and VCAM1. Induces apoptosis in ECs by promoting the FOXO1-dependent expression of CCL2 and BCL2L11 which are involved in EC chemotaxis and apoptosis. In response to oxidative stress, initiates proapoptotic and antiapoptotic signaling in ECs via activation of NF-kappa-B and AKT1 and up-regulation of antiapoptotic protein BCL2. Negatively regulates MAP3K5/ASK1 kinase activity, autophosphorylation and oxidative stress-induced apoptosis mediated by MAP3K5/ASK1. Necessary for the assembly of TARDBP in heterogeneous nuclear ribonucleoprotein (hnRNP) complexes and regulates TARDBP binding to RNA UG repeats and TARDBP-dependent expression of HDAC6, ATG7 and VCP which are involved in clearance of protein aggregates. Plays an important role in platelet activation and aggregation. Regulates calcium mobilization and integrin ITGA2B:ITGB3 bidirectional signaling via increased ROS production as well as by facilitating the interaction between integrin and the cell cytoskeleton. Binds heparan sulfate glycosaminoglycans. This Oryctolagus cuniculus (Rabbit) protein is Peptidyl-prolyl cis-trans isomerase A (PPIA).